Consider the following 370-residue polypeptide: ABSCISIC ACID-INSENSITIVE 5-like protein 8 (370 aa).

Phosphoserine is present on residues S25, S44, and S69. Residues 56–77 are disordered; the sequence is SAEETQEGSQRQGSTTLPPTLS. A compositionally biased stretch (polar residues) spans 62-77; sequence EGSQRQGSTTLPPTLS. The residue at position 111 (T111) is a Phosphothreonine. A compositionally biased stretch (polar residues) spans 260–278; the sequence is ESSLLSPSPYISNGSTSTR. The interval 260–281 is disordered; that stretch reads ESSLLSPSPYISNGSTSTRGGK. Positions 293-356 constitute a bZIP domain; it reads VDKKLRRKIK…MEPGMISLHE (64 aa). The tract at residues 295 to 314 is basic motif; the sequence is KKLRRKIKNRESAARSRARK. The tract at residues 328 to 342 is leucine-zipper; sequence LKKDYEELLKQHVEL. Residues 349–370 are disordered; it reads PGMISLHERPERKLRRTKSDIK. A compositionally biased stretch (basic and acidic residues) spans 354–370; the sequence is LHERPERKLRRTKSDIK.

Belongs to the bZIP family. ABI5 subfamily. In terms of assembly, DNA-binding heterodimer.

Its subcellular location is the nucleus. Could participate in abscisic acid-regulated gene expression. The protein is ABSCISIC ACID-INSENSITIVE 5-like protein 8 (BZIP15) of Arabidopsis thaliana (Mouse-ear cress).